A 347-amino-acid polypeptide reads, in one-letter code: Phenylalanine--tRNA ligase alpha subunit (347 aa).

Glu261 serves as a coordination point for Mg(2+).

It belongs to the class-II aminoacyl-tRNA synthetase family. Phe-tRNA synthetase alpha subunit type 1 subfamily. As to quaternary structure, tetramer of two alpha and two beta subunits. Mg(2+) serves as cofactor.

The protein resides in the cytoplasm. The enzyme catalyses tRNA(Phe) + L-phenylalanine + ATP = L-phenylalanyl-tRNA(Phe) + AMP + diphosphate + H(+). The chain is Phenylalanine--tRNA ligase alpha subunit from Streptococcus mutans serotype c (strain ATCC 700610 / UA159).